A 572-amino-acid chain; its full sequence is Methionine--tRNA ligase (572 aa).

The 'HIGH' region motif lies at 11 to 21; that stretch reads PYINGIKHLGN. The Zn(2+) site is built by Cys-143, Cys-146, Cys-156, and Cys-159. The 'KMSKS' region motif lies at 346 to 350; that stretch reads QFSTS. ATP is bound at residue Thr-349.

The protein belongs to the class-I aminoacyl-tRNA synthetase family. MetG type 1 subfamily. As to quaternary structure, monomer. Zn(2+) serves as cofactor.

It localises to the cytoplasm. It carries out the reaction tRNA(Met) + L-methionine + ATP = L-methionyl-tRNA(Met) + AMP + diphosphate. Is required not only for elongation of protein synthesis but also for the initiation of all mRNA translation through initiator tRNA(fMet) aminoacylation. In Roseobacter denitrificans (strain ATCC 33942 / OCh 114) (Erythrobacter sp. (strain OCh 114)), this protein is Methionine--tRNA ligase.